The primary structure comprises 179 residues: Large ribosomal subunit protein uL5 (179 aa).

The protein belongs to the universal ribosomal protein uL5 family. In terms of assembly, part of the 50S ribosomal subunit; part of the 5S rRNA/L5/L18/L25 subcomplex. Contacts the 5S rRNA and the P site tRNA. Forms a bridge to the 30S subunit in the 70S ribosome.

This is one of the proteins that bind and probably mediate the attachment of the 5S RNA into the large ribosomal subunit, where it forms part of the central protuberance. In the 70S ribosome it contacts protein S13 of the 30S subunit (bridge B1b), connecting the 2 subunits; this bridge is implicated in subunit movement. Contacts the P site tRNA; the 5S rRNA and some of its associated proteins might help stabilize positioning of ribosome-bound tRNAs. The sequence is that of Large ribosomal subunit protein uL5 from Clostridium botulinum (strain Alaska E43 / Type E3).